The following is a 93-amino-acid chain: Putative membrane protein insertion efficiency factor (93 aa).

A disordered region spans residues 72–93 (VPEHFPSWRGPHPKTPSRKTPE). Residues 82–93 (PHPKTPSRKTPE) show a composition bias toward basic residues.

It belongs to the UPF0161 family.

It is found in the cell membrane. Functionally, could be involved in insertion of integral membrane proteins into the membrane. This is Putative membrane protein insertion efficiency factor from Deinococcus geothermalis (strain DSM 11300 / CIP 105573 / AG-3a).